The primary structure comprises 315 residues: Homoserine kinase (315 aa).

96-106 contributes to the ATP binding site; the sequence is PHSRGLGSSAA.

It belongs to the GHMP kinase family. Homoserine kinase subfamily.

It localises to the cytoplasm. The catalysed reaction is L-homoserine + ATP = O-phospho-L-homoserine + ADP + H(+). It functions in the pathway amino-acid biosynthesis; L-threonine biosynthesis; L-threonine from L-aspartate: step 4/5. Its function is as follows. Catalyzes the ATP-dependent phosphorylation of L-homoserine to L-homoserine phosphate. The sequence is that of Homoserine kinase from Mycolicibacterium paratuberculosis (strain ATCC BAA-968 / K-10) (Mycobacterium paratuberculosis).